A 117-amino-acid polypeptide reads, in one-letter code: MAFLMSEFIGLGLAGAGVLSNALLRRQELQLQKQALENGLVLKADQLGRLGFNPNEVKNVIVGNSFSSNVRLSNMHNDASVVNAYNVYNPASNGIRKKIKSLNNSVKIYNTTGESSV.

The protein belongs to the lagovirus VP2 protein family. As to quaternary structure, homooligomer. The portal-like structure consists in 12 copies of VP2. Interacts with capsid protein VP1.

It is found in the virion. The protein resides in the host cytoplasm. Its function is as follows. Minor structural protein that forms a portal-like structure at a unique three-fold axis of symmetry, following binding to the host receptor. The channel formed by VP2 may allow the delivery of the viral genome through the host endosomal membrane. In Oryctolagus cuniculus (Rabbit), this protein is Minor capsid protein VP2.